Here is a 501-residue protein sequence, read N- to C-terminus: Lysine--tRNA ligase (501 aa).

Glu406 and Glu413 together coordinate Mg(2+).

Belongs to the class-II aminoacyl-tRNA synthetase family. Homodimer. Mg(2+) serves as cofactor.

The protein resides in the cytoplasm. The catalysed reaction is tRNA(Lys) + L-lysine + ATP = L-lysyl-tRNA(Lys) + AMP + diphosphate. In Halalkalibacterium halodurans (strain ATCC BAA-125 / DSM 18197 / FERM 7344 / JCM 9153 / C-125) (Bacillus halodurans), this protein is Lysine--tRNA ligase (lysS).